The primary structure comprises 196 residues: 3-isopropylmalate dehydratase small subunit (196 aa).

It belongs to the LeuD family. LeuD type 1 subfamily. Heterodimer of LeuC and LeuD.

It catalyses the reaction (2R,3S)-3-isopropylmalate = (2S)-2-isopropylmalate. It functions in the pathway amino-acid biosynthesis; L-leucine biosynthesis; L-leucine from 3-methyl-2-oxobutanoate: step 2/4. In terms of biological role, catalyzes the isomerization between 2-isopropylmalate and 3-isopropylmalate, via the formation of 2-isopropylmaleate. The chain is 3-isopropylmalate dehydratase small subunit from Corynebacterium efficiens (strain DSM 44549 / YS-314 / AJ 12310 / JCM 11189 / NBRC 100395).